Here is a 238-residue protein sequence, read N- to C-terminus: MGRSFEVRKASMAKTAGAKIKVYSKYGKEIYMCAKNGGSDPDMNLSLKHLIAKAKKDQVPAHVIEKALDKANGGGGEDYVPARYEGFGPGGTSVIVDCLTDNGNRTFQDVRQCFVKVGAKIGVEGSVSHMFDHQAVFQFKGEDDEVILETLMMEDVDVTDVELEDGVITVFAPHTEFFKTKTALNAAFPDLTIDVEEITFVPQTQTPVAGEDAEKFQKFLDLLDDCDDVQQVYHNAEL.

This sequence belongs to the TACO1 family.

Its subcellular location is the cytoplasm. The sequence is that of Probable transcriptional regulatory protein VPA0011 from Vibrio parahaemolyticus serotype O3:K6 (strain RIMD 2210633).